An 84-amino-acid chain; its full sequence is Sulfur carrier protein TusA (84 aa).

C19 (cysteine persulfide intermediate) is an active-site residue.

The protein belongs to the sulfur carrier protein TusA family. As to quaternary structure, interacts with IscS.

The protein localises to the cytoplasm. The protein operates within tRNA modification. Functionally, sulfur carrier protein involved in sulfur trafficking in the cell. Part of a sulfur-relay system required for 2-thiolation during synthesis of 2-thiouridine of the modified wobble base 5-methylaminomethyl-2-thiouridine (mnm(5)s(2)U) in tRNA. Interacts with IscS and stimulates its cysteine desulfurase activity. Accepts an activated sulfur from IscS, which is then transferred to TusD, and thus determines the direction of sulfur flow from IscS to 2-thiouridine formation. Also appears to be involved in sulfur transfer for the biosynthesis of molybdopterin. This Photorhabdus laumondii subsp. laumondii (strain DSM 15139 / CIP 105565 / TT01) (Photorhabdus luminescens subsp. laumondii) protein is Sulfur carrier protein TusA.